The sequence spans 87 residues: Phytosulfokines 2 (87 aa).

Positions 1 to 22 are cleaved as a signal peptide; that stretch reads MANVSALLTIALLLCSTLMCTA. Residues 23–77 constitute a propeptide that is removed on maturation; that stretch reads RPEPAISISITTAADPCNMEKKIEGKLDDMHMVDENCGADDEDCLMRRTLVAHTD. Sulfotyrosine is present on residues tyrosine 78 and tyrosine 80. Residues 83 to 87 constitute a propeptide that is removed on maturation; sequence KKKHP.

The protein belongs to the phytosulfokine family. Sulfation is important for activity and for the binding to a putative membrane receptor. Post-translationally, PSK-beta is an enzymatic derivative of PSK-alpha. Expressed in stems, roots and leaves.

The protein localises to the secreted. Promotes plant cell differentiation, organogenesis and somatic embryogenesis as well as cell proliferation. This is Phytosulfokines 2 (PSK2) from Arabidopsis thaliana (Mouse-ear cress).